The sequence spans 461 residues: Early growth response factor homolog 1 (461 aa).

Disordered stretches follow at residues 1-25 (MALHEPPSKLNRHSHSNLLKPPSLN), 96-152 (TLMP…ELTL), and 232-308 (DVLH…YSSL). Polar residues-rich tracts occupy residues 96-105 (TLMPAPSSSY), 129-144 (GSNSFGVPRMTNGNSK), 249-265 (LGSSLQNEHPQSNSRPS), and 272-291 (QRTNTSASLTRSMDHSSMSP). The span at 299–308 (YSNSASYSSL) shows a compositional bias: low complexity. 3 C2H2-type zinc fingers span residues 374–398 (YKCPRDGCDRRFSRSDELTRHIRIH), 404–426 (FQCRICMRAFSRSDHLTTHVRTH), and 432–454 (FSCDICGRKFARSDERKRHTKVH).

The protein belongs to the EGR C2H2-type zinc-finger protein family. As to expression, expressed in sheath cells and distal tip cells of the somatic gonad, as well as in the intestine and sperm (at protein level). Expression not observed in oocytes (at protein level).

Its subcellular location is the nucleus. It localises to the cytoplasm. It is found in the perinuclear region. Functionally, sequence-specific DNA-binding transcription factor. Plays a role in oocyte development, acting cell-autonomously in the somatic gonad. Involved in negative regulation of oocyte MAPK activation and inhibits oocyte maturation and ovulation. In Caenorhabditis elegans, this protein is Early growth response factor homolog 1.